The chain runs to 128 residues: Ribonuclease P protein component (128 aa).

The protein belongs to the RnpA family. As to quaternary structure, consists of a catalytic RNA component (M1 or rnpB) and a protein subunit.

The catalysed reaction is Endonucleolytic cleavage of RNA, removing 5'-extranucleotides from tRNA precursor.. RNaseP catalyzes the removal of the 5'-leader sequence from pre-tRNA to produce the mature 5'-terminus. It can also cleave other RNA substrates such as 4.5S RNA. The protein component plays an auxiliary but essential role in vivo by binding to the 5'-leader sequence and broadening the substrate specificity of the ribozyme. This Prochlorococcus marinus (strain MIT 9301) protein is Ribonuclease P protein component.